Reading from the N-terminus, the 120-residue chain is NAD(P)H-quinone oxidoreductase subunit 3, chloroplastic (120 aa).

The next 3 membrane-spanning stretches (helical) occupy residues 9–29 (IFWTFLIIASLIPILAFWISG), 64–84 (MFALVFVVFDVETVFLYPWAM), and 88–108 (VLGVSVFIEAFIFVLILVVGL).

This sequence belongs to the complex I subunit 3 family. As to quaternary structure, NDH is composed of at least 16 different subunits, 5 of which are encoded in the nucleus.

It localises to the plastid. The protein resides in the chloroplast thylakoid membrane. The catalysed reaction is a plastoquinone + NADH + (n+1) H(+)(in) = a plastoquinol + NAD(+) + n H(+)(out). It catalyses the reaction a plastoquinone + NADPH + (n+1) H(+)(in) = a plastoquinol + NADP(+) + n H(+)(out). In terms of biological role, NDH shuttles electrons from NAD(P)H:plastoquinone, via FMN and iron-sulfur (Fe-S) centers, to quinones in the photosynthetic chain and possibly in a chloroplast respiratory chain. The immediate electron acceptor for the enzyme in this species is believed to be plastoquinone. Couples the redox reaction to proton translocation, and thus conserves the redox energy in a proton gradient. This chain is NAD(P)H-quinone oxidoreductase subunit 3, chloroplastic, found in Brachypodium distachyon (Purple false brome).